Reading from the N-terminus, the 567-residue chain is Thiol:disulfide interchange protein DsbD (567 aa).

The first 19 residues, 1–19 (MAQRIFTLILLLCSTSAFA), serve as a signal peptide directing secretion. Intrachain disulfides connect Cys122–Cys128 and Cys185–Cys307. The next 8 membrane-spanning stretches (helical) occupy residues 166 to 186 (LPFSALWALLIGIGIAFTPCV), 210 to 230 (LLLAFIYVQGMALTYTALGLV), 246 to 266 (YVLIGLAIVFTLLALSMFGLF), 299 to 319 (IAGLICSPCTTAPLSAILLYI), 326 to 346 (WLGGGTLYLYALGMGLPLMLV), 360 to 380 (WMAHVKTAFGFVILALPVFLL), 387 to 407 (AWGLRLWSLLGVAFFGWAFIT), and 418 to 438 (IVQIILLAAALISVRPLQDWA). The 133-residue stretch at 435-567 (QDWAFGSPSA…FSAHLHDRQP (133 aa)) folds into the Thioredoxin domain. Cysteines 482 and 485 form a disulfide.

It belongs to the thioredoxin family. DsbD subfamily.

The protein localises to the cell inner membrane. The enzyme catalyses [protein]-dithiol + NAD(+) = [protein]-disulfide + NADH + H(+). The catalysed reaction is [protein]-dithiol + NADP(+) = [protein]-disulfide + NADPH + H(+). Required to facilitate the formation of correct disulfide bonds in some periplasmic proteins and for the assembly of the periplasmic c-type cytochromes. Acts by transferring electrons from cytoplasmic thioredoxin to the periplasm. This transfer involves a cascade of disulfide bond formation and reduction steps. The protein is Thiol:disulfide interchange protein DsbD of Salmonella choleraesuis (strain SC-B67).